Consider the following 411-residue polypeptide: tRNA (guanine(37)-N(1))-methyltransferase (411 aa).

Residues H216, 254–255, 282–283, and N303 each bind S-adenosyl-L-methionine; these read DL and DG. The tract at residues 391–411 is disordered; it reads ERQASKQDDPKRRKVAAENAA.

It belongs to the class I-like SAM-binding methyltransferase superfamily. TRM5/TYW2 family. Monomer.

The protein resides in the mitochondrion matrix. Its subcellular location is the nucleus. The protein localises to the cytoplasm. The catalysed reaction is guanosine(37) in tRNA + S-adenosyl-L-methionine = N(1)-methylguanosine(37) in tRNA + S-adenosyl-L-homocysteine + H(+). Its function is as follows. Specifically methylates the N1 position of guanosine-37 in various cytoplasmic and mitochondrial tRNAs. Methylation is not dependent on the nature of the nucleoside 5' of the target nucleoside. This is the first step in the biosynthesis of wybutosine (yW), a modified base adjacent to the anticodon of tRNAs and required for accurate decoding. The protein is tRNA (guanine(37)-N(1))-methyltransferase of Phytophthora infestans (strain T30-4) (Potato late blight agent).